The primary structure comprises 1388 residues: Endoribonuclease Dicer homolog 2 (1388 aa).

A Helicase ATP-binding domain is found at 31 to 210; the sequence is ALEKAIKQNT…DSYWKKIHEL (180 aa). 44–51 serves as a coordination point for ATP; sequence LETGSGKT. Positions 152 to 155 match the DECH box motif; sequence DECH. Positions 380–544 constitute a Helicase C-terminal domain; that stretch reads LGYSSLENIR…PLPDDSDEPL (165 aa). A Dicer dsRNA-binding fold domain is found at 559–645; that stretch reads SVSLIYHYCS…VPDMVVAETV (87 aa). Positions 805-935 constitute a PAZ domain; sequence TSHEVLEKHE…LPPELCHVIL (131 aa). RNase III domains are found at residues 962–1113 and 1149–1296; these read AYNL…SEGG and VGYM…VDSG. The Mg(2+) site is built by Glu1188, Asp1282, and Glu1285. One can recognise a DRBM domain in the interval 1315-1384; the sequence is TPETVKLHPV…YKEVLNLLKN (70 aa).

This sequence belongs to the helicase family. Dicer subfamily. It depends on Mg(2+) as a cofactor. The cofactor is Mn(2+).

It is found in the nucleus. Its subcellular location is the cytoplasm. Ribonuclease (RNase) III involved in RNA-mediated post-transcriptional gene silencing (PTGS). Involved in the processing of natural small interfering RNAs (nat-siRNAs, derived from cis-natural antisense transcripts) by cleaving small dsRNAs into 24 nucleotide nat-siRNAs. Plays an essential role in transitive silencing of transgenes by processing secondary siRNAs. This pathway, which requires DCL4 and RDR6, amplifies silencing by using the target RNA as substrate to generate secondary siRNAs, providing an efficient mechanism for long-distance silencing. May participate with DCL3 in the production of 24 nucleotide repeat-associated siRNAs (ra-siRNAs) which derive from heterochromatin and DNA repeats such as transposons. Plays a role in antiviral RNA silencing. Involved in the production of viral siRNAs derived from the turnip crinkle virus (TCV) and tobacco rattle virus (TRV). Targeted by the viral silencing suppressor (VSR) protein 2b of the cucumber mosaic virus (CMV) that inactivates DCL2 function in RNA silencing. Does not seem to be involved in microRNAs (miRNAs) processing. In Arabidopsis thaliana (Mouse-ear cress), this protein is Endoribonuclease Dicer homolog 2.